The sequence spans 72 residues: Large ribosomal subunit protein bL31 (72 aa).

The Zn(2+) site is built by cysteine 16, cysteine 18, cysteine 37, and cysteine 40.

Belongs to the bacterial ribosomal protein bL31 family. Type A subfamily. As to quaternary structure, part of the 50S ribosomal subunit. Requires Zn(2+) as cofactor.

Binds the 23S rRNA. This is Large ribosomal subunit protein bL31 from Buchnera aphidicola subsp. Acyrthosiphon pisum (strain Tuc7).